A 217-amino-acid polypeptide reads, in one-letter code: Protein LURP-one-related 2 (217 aa).

Belongs to the LOR family.

Its function is as follows. Might be related to the phospholipid scramblase and tubby-like superfamily of membrane tethered transcription factors. In Arabidopsis thaliana (Mouse-ear cress), this protein is Protein LURP-one-related 2.